The primary structure comprises 340 residues: COP9 signalosome complex subunit 5 (340 aa).

Residues 52 to 189 (VRISATALIK…IGAFRTYPAD (138 aa)) enclose the MPN domain. Zn(2+)-binding residues include His-135, His-137, and Asp-148. The JAMM motif signature appears at 135-148 (HSHPGYGCWLSGID).

The protein belongs to the peptidase M67A family. CSN5 subfamily. In terms of assembly, component of the COP9 signalosome (CSN) complex.

The protein resides in the cytoplasm. The protein localises to the nucleus. Catalytic Component of the COP9 signalosome (CSN) complex that acts as an regulator of the ubiquitin (Ubl) conjugation pathway by mediating the deneddylation of the cullin subunit of SCF-type E3 ubiquitin-protein ligase complexes. This is COP9 signalosome complex subunit 5 (RRI1) from Gibberella zeae (strain ATCC MYA-4620 / CBS 123657 / FGSC 9075 / NRRL 31084 / PH-1) (Wheat head blight fungus).